The primary structure comprises 350 residues: MSQLQVRHDWKREEIEALFALPMNDLLFKAHSIHREVYDPNEVQISRLLSIKTGACPEDCKYCPQSARYDTGLEKERLLAMETVLTEARSAKAAGASRFCMGAAWRNPKEKDMPYLKQMVQEVKALGMETCMTLGMLSAEQANELADAGLDYYNHNLDTSPEYYGDVITTRTYQNRLDTLTHVRASGMKVCSGGIVGMGEKATDRAGLLQQLANLPQHPDSVPINMLVKVAGTPFEKLDDLDPLEFVRTIAVARILMPLSRVRLSAGRENMSDELQAMCFFAGANSIFYGCKLLTTPNPEESDDMGLFRRLGLRPEQGAVATLDDEQAVLAKAAAHQDKSTAQFYDAAAL.

The Radical SAM core domain occupies 41–268 (NEVQISRLLS…LSRVRLSAGR (228 aa)). [4Fe-4S] cluster contacts are provided by Cys56, Cys60, and Cys63. Residues Cys100, Cys131, Cys191, and Arg263 each contribute to the [2Fe-2S] cluster site.

Belongs to the radical SAM superfamily. Biotin synthase family. In terms of assembly, homodimer. Requires [4Fe-4S] cluster as cofactor. The cofactor is [2Fe-2S] cluster.

It carries out the reaction (4R,5S)-dethiobiotin + (sulfur carrier)-SH + 2 reduced [2Fe-2S]-[ferredoxin] + 2 S-adenosyl-L-methionine = (sulfur carrier)-H + biotin + 2 5'-deoxyadenosine + 2 L-methionine + 2 oxidized [2Fe-2S]-[ferredoxin]. It functions in the pathway cofactor biosynthesis; biotin biosynthesis; biotin from 7,8-diaminononanoate: step 2/2. In terms of biological role, catalyzes the conversion of dethiobiotin (DTB) to biotin by the insertion of a sulfur atom into dethiobiotin via a radical-based mechanism. The polypeptide is Biotin synthase (Shewanella putrefaciens (strain CN-32 / ATCC BAA-453)).